The primary structure comprises 538 residues: Inositol phosphate phosphatase IpgD (538 aa).

The active site involves C439. Residues 439-445 carry the CX5R motif motif; it reads CKSGKDR.

This sequence belongs to the phosphatase IpgD/SopB family.

It localises to the secreted. The enzyme catalyses a 1,2-diacyl-sn-glycero-3-phospho-(1D-myo-inositol-4,5-bisphosphate) + H2O = a 1,2-diacyl-sn-glycero-3-phospho-(1D-myo-inositol-5-phosphate) + phosphate. Functionally, converts phosphatidylinositol 4,5-bisphosphate (PtdIns 4,5-P2) to PtdIns 5-P. IpgD is injected by Shigella into the host cell and is required for invasion. The accumulation of PtdIns 5-P causes membrane ruffling and actin cytoskeleton rearrangements at the entry site. Acts in concert with IpaA to coordinate and control the membrane and cytoskeletal rearrangements induced early after invasion of the host cell. This is Inositol phosphate phosphatase IpgD (ipgD) from Shigella flexneri.